Consider the following 132-residue polypeptide: Small ribosomal subunit protein uS8 (132 aa).

This sequence belongs to the universal ribosomal protein uS8 family. In terms of assembly, part of the 30S ribosomal subunit. Contacts proteins S5 and S12.

One of the primary rRNA binding proteins, it binds directly to 16S rRNA central domain where it helps coordinate assembly of the platform of the 30S subunit. In Streptomyces avermitilis (strain ATCC 31267 / DSM 46492 / JCM 5070 / NBRC 14893 / NCIMB 12804 / NRRL 8165 / MA-4680), this protein is Small ribosomal subunit protein uS8.